The primary structure comprises 301 residues: 3-dehydroquinate dehydratase (301 aa).

Positions 1–221 (MLQYGVLICG…YYAALLALGI (221 aa)) are 3-dehydroquinate dehydratase. 3-dehydroquinate contacts are provided by residues 32-34 (ELR) and arginine 63. Residue histidine 119 is the Proton donor/acceptor of the active site. The active-site Schiff-base intermediate with substrate is lysine 145. Positions 183, 202, and 206 each coordinate 3-dehydroquinate. Residues 222–301 (TPSGGGLPAL…QMCKAVQLVA (80 aa)) enclose the Chorismate mutase domain.

Belongs to the type-I 3-dehydroquinase family. As to quaternary structure, homodimer.

The catalysed reaction is 3-dehydroquinate = 3-dehydroshikimate + H2O. Its pathway is metabolic intermediate biosynthesis; chorismate biosynthesis; chorismate from D-erythrose 4-phosphate and phosphoenolpyruvate: step 3/7. Functionally, involved in the third step of the chorismate pathway, which leads to the biosynthesis of aromatic amino acids. Catalyzes the cis-dehydration of 3-dehydroquinate (DHQ) and introduces the first double bond of the aromatic ring to yield 3-dehydroshikimate. The protein is 3-dehydroquinate dehydratase of Pyrobaculum aerophilum (strain ATCC 51768 / DSM 7523 / JCM 9630 / CIP 104966 / NBRC 100827 / IM2).